Consider the following 176-residue polypeptide: Phosphopantetheine adenylyltransferase (176 aa).

Serine 8 lines the substrate pocket. ATP-binding positions include 8 to 9 (SF) and histidine 16. Substrate is bound by residues lysine 40, threonine 72, and arginine 86. ATP-binding positions include 87–89 (GLR), glutamate 97, and 122–128 (YSFLSSS).

It belongs to the bacterial CoaD family. Homohexamer. It depends on Mg(2+) as a cofactor.

The protein localises to the cytoplasm. The enzyme catalyses (R)-4'-phosphopantetheine + ATP + H(+) = 3'-dephospho-CoA + diphosphate. It participates in cofactor biosynthesis; coenzyme A biosynthesis; CoA from (R)-pantothenate: step 4/5. Reversibly transfers an adenylyl group from ATP to 4'-phosphopantetheine, yielding dephospho-CoA (dPCoA) and pyrophosphate. This is Phosphopantetheine adenylyltransferase from Acaryochloris marina (strain MBIC 11017).